Reading from the N-terminus, the 627-residue chain is Carene synthase 2, chloroplastic (627 aa).

A chloroplast-targeting transit peptide spans 1-36 (MSVISIVPLASKSCLYKSLMSSTHELKALCRPIVTL). Aspartate 378, aspartate 382, and aspartate 530 together coordinate Mg(2+). The DDXXD motif signature appears at 378–382 (DDMYD).

Belongs to the terpene synthase family. Tpsd subfamily. Mg(2+) serves as cofactor. It depends on Mn(2+) as a cofactor.

It is found in the plastid. Its subcellular location is the chloroplast. It catalyses the reaction (2E)-geranyl diphosphate = (+)-car-3-ene + diphosphate. Its pathway is terpene metabolism; oleoresin biosynthesis. Terpene synthase (TPS) involved in defensive oleoresin formation in conifers in response to insect attack (e.g. white pine weevil P.strobi) or other injury. The polypeptide is Carene synthase 2, chloroplastic (TPS-3car2) (Picea sitchensis (Sitka spruce)).